The primary structure comprises 948 residues: Valine--tRNA ligase (948 aa).

The short motif at 40–50 (PNVTGSLHMGH) is the 'HIGH' region element. Positions 551 to 555 (KMSKS) match the 'KMSKS' region motif. ATP is bound at residue Lys-554. Residues 879–945 (LIDKGAELAR…GKLAEQHARI (67 aa)) adopt a coiled-coil conformation.

This sequence belongs to the class-I aminoacyl-tRNA synthetase family. ValS type 1 subfamily. As to quaternary structure, monomer.

It is found in the cytoplasm. It carries out the reaction tRNA(Val) + L-valine + ATP = L-valyl-tRNA(Val) + AMP + diphosphate. Its function is as follows. Catalyzes the attachment of valine to tRNA(Val). As ValRS can inadvertently accommodate and process structurally similar amino acids such as threonine, to avoid such errors, it has a 'posttransfer' editing activity that hydrolyzes mischarged Thr-tRNA(Val) in a tRNA-dependent manner. The protein is Valine--tRNA ligase of Pseudomonas syringae pv. syringae (strain B728a).